The sequence spans 354 residues: Small ribosomal subunit biogenesis GTPase RsgA (354 aa).

Residues 1–46 are disordered; sequence MSKKKPLSQGQLRRMRANHEKRLNRDSGDKNTPELQDSSLGPEQSG. Positions 17–32 are enriched in basic and acidic residues; that stretch reads ANHEKRLNRDSGDKNT. The segment covering 33–46 has biased composition (polar residues); sequence PELQDSSLGPEQSG. The CP-type G domain occupies 108–276; the sequence is HSSLSRPDLY…LIDSPGVREF (169 aa). GTP-binding positions include 164–167 and 218–226; these read NKID and GQSGVGKSS. Cys300, Cys305, His307, and Cys313 together coordinate Zn(2+).

The protein belongs to the TRAFAC class YlqF/YawG GTPase family. RsgA subfamily. Monomer. Associates with 30S ribosomal subunit, binds 16S rRNA. Requires Zn(2+) as cofactor.

It is found in the cytoplasm. Functionally, one of several proteins that assist in the late maturation steps of the functional core of the 30S ribosomal subunit. Helps release RbfA from mature subunits. May play a role in the assembly of ribosomal proteins into the subunit. Circularly permuted GTPase that catalyzes slow GTP hydrolysis, GTPase activity is stimulated by the 30S ribosomal subunit. This Shewanella oneidensis (strain ATCC 700550 / JCM 31522 / CIP 106686 / LMG 19005 / NCIMB 14063 / MR-1) protein is Small ribosomal subunit biogenesis GTPase RsgA.